The following is a 593-amino-acid chain: NADH-quinone oxidoreductase subunit C/D (593 aa).

The segment at 1 to 184 (MTADNAIFIP…DPYSLTLAKQ (184 aa)) is NADH dehydrogenase I subunit C. The tract at residues 208–593 (DYMFLNLGPN…IDFVMADVDR (386 aa)) is NADH dehydrogenase I subunit D.

The protein in the N-terminal section; belongs to the complex I 30 kDa subunit family. It in the C-terminal section; belongs to the complex I 49 kDa subunit family. As to quaternary structure, NDH-1 is composed of 13 different subunits. Subunits NuoB, CD, E, F, and G constitute the peripheral sector of the complex.

The protein resides in the cell inner membrane. It carries out the reaction a quinone + NADH + 5 H(+)(in) = a quinol + NAD(+) + 4 H(+)(out). NDH-1 shuttles electrons from NADH, via FMN and iron-sulfur (Fe-S) centers, to quinones in the respiratory chain. The immediate electron acceptor for the enzyme in this species is believed to be ubiquinone. Couples the redox reaction to proton translocation (for every two electrons transferred, four hydrogen ions are translocated across the cytoplasmic membrane), and thus conserves the redox energy in a proton gradient. This Pseudomonas putida (strain ATCC 47054 / DSM 6125 / CFBP 8728 / NCIMB 11950 / KT2440) protein is NADH-quinone oxidoreductase subunit C/D.